The primary structure comprises 277 residues: Thymidylate synthase (277 aa).

Arginine 21 is a binding site for dUMP. Histidine 51 provides a ligand contact to (6R)-5,10-methylene-5,6,7,8-tetrahydrofolate. 126–127 (RR) lines the dUMP pocket. The Nucleophile role is filled by cysteine 159. DUMP is bound by residues 179–182 (RSAD), asparagine 190, and 220–222 (HLY). A (6R)-5,10-methylene-5,6,7,8-tetrahydrofolate-binding site is contributed by aspartate 182. Serine 276 lines the (6R)-5,10-methylene-5,6,7,8-tetrahydrofolate pocket.

It belongs to the thymidylate synthase family. Bacterial-type ThyA subfamily. In terms of assembly, homodimer.

The protein resides in the cytoplasm. The catalysed reaction is dUMP + (6R)-5,10-methylene-5,6,7,8-tetrahydrofolate = 7,8-dihydrofolate + dTMP. It participates in pyrimidine metabolism; dTTP biosynthesis. Functionally, catalyzes the reductive methylation of 2'-deoxyuridine-5'-monophosphate (dUMP) to 2'-deoxythymidine-5'-monophosphate (dTMP) while utilizing 5,10-methylenetetrahydrofolate (mTHF) as the methyl donor and reductant in the reaction, yielding dihydrofolate (DHF) as a by-product. This enzymatic reaction provides an intracellular de novo source of dTMP, an essential precursor for DNA biosynthesis. This is Thymidylate synthase from Saccharophagus degradans (strain 2-40 / ATCC 43961 / DSM 17024).